We begin with the raw amino-acid sequence, 417 residues long: Paired box protein Pax-2 (417 aa).

Positions 16–142 (GHGGVNQLGG…SSINRIIRTK (127 aa)) form a DNA-binding region, paired. Residues 19–75 (GVNQLGGVFVNGRPLPDVVRQRIVELAHQGVRPCDISRQLRVSHGCVSKILGRYYET) form a PAI subdomain region. Residues 94–142 (KVVDKIAEYKRQNPTMFAWEIRDRLLAEGICDNDTVPSVSSINRIIRTK) are RED subdomain. T226 is subject to Phosphothreonine. A disordered region spans residues 304–325 (KSSLSASTNPELGSNVSGTQTY). The segment covering 305–325 (SSLSASTNPELGSNVSGTQTY) has biased composition (polar residues).

Interacts with ELGN3; the interaction targets PAX2 for destruction. Interacts with TLE4. As to expression, expressed in primitive cells of the kidney, ureter, eye, ear and central nervous system.

Its subcellular location is the nucleus. In terms of biological role, transcription factor that may have a role in kidney cell differentiation. Has a critical role in the development of the urogenital tract, the eyes, and the CNS. In Homo sapiens (Human), this protein is Paired box protein Pax-2 (PAX2).